A 425-amino-acid chain; its full sequence is Formyl-CoA:oxalate CoA-transferase (425 aa).

Residues 17–18, arginine 38, 72–75, 96–98, arginine 104, and 136–139 each bind CoA; these read QS, LDTK, NFG, and KVYE. Aspartate 168 functions as the Nucleophile in the catalytic mechanism. 247-249 contacts substrate; it reads GGQ.

It belongs to the CoA-transferase III family. Frc subfamily. In terms of assembly, homodimer.

The enzyme catalyses formyl-CoA + oxalate = oxalyl-CoA + formate. It participates in metabolic intermediate degradation; oxalate degradation; CO(2) and formate from oxalate: step 1/2. In terms of biological role, involved in the catabolism of oxalate and in the adapatation to low pH via the induction of the oxalate-dependent acid tolerance response (ATR). Catalyzes the transfer of the CoA moiety from formyl-CoA to oxalate. The chain is Formyl-CoA:oxalate CoA-transferase from Rhodopseudomonas palustris (strain BisA53).